Reading from the N-terminus, the 631-residue chain is RNA polymerase sigma factor RpoD (631 aa).

Positions 395–465 (LIKANLRLVV…TRSISDQART (71 aa)) are sigma-70 factor domain-2. An Interaction with polymerase core subunit RpoC motif is present at residues 419–422 (DLVQ). Residues 474-550 (EQINRLNRET…DKAIKNPANH (77 aa)) are sigma-70 factor domain-3. Positions 563 to 616 (ILGTLPEREQEVVKMRFGLEDGYSLTLEEVGLHFNVTRERIRQIESKALRRLKN) are sigma-70 factor domain-4. The segment at residues 589 to 608 (LEEVGLHFNVTRERIRQIES) is a DNA-binding region (H-T-H motif).

It belongs to the sigma-70 factor family. RpoD/SigA subfamily. Interacts transiently with the RNA polymerase catalytic core.

Its subcellular location is the cytoplasm. Sigma factors are initiation factors that promote the attachment of RNA polymerase to specific initiation sites and are then released. This sigma factor is the primary sigma factor during exponential growth. The sequence is that of RNA polymerase sigma factor RpoD from Borreliella burgdorferi (strain ATCC 35210 / DSM 4680 / CIP 102532 / B31) (Borrelia burgdorferi).